Consider the following 68-residue polypeptide: DNA-directed RNA polymerase subunit omega (68 aa).

Belongs to the RNA polymerase subunit omega family. As to quaternary structure, the RNAP catalytic core consists of 2 alpha, 1 beta, 1 beta' and 1 omega subunit. When a sigma factor is associated with the core the holoenzyme is formed, which can initiate transcription.

It carries out the reaction RNA(n) + a ribonucleoside 5'-triphosphate = RNA(n+1) + diphosphate. In terms of biological role, promotes RNA polymerase assembly. Latches the N- and C-terminal regions of the beta' subunit thereby facilitating its interaction with the beta and alpha subunits. The protein is DNA-directed RNA polymerase subunit omega of Syntrophotalea carbinolica (strain DSM 2380 / NBRC 103641 / GraBd1) (Pelobacter carbinolicus).